Here is a 107-residue protein sequence, read N- to C-terminus: NADH-quinone oxidoreductase subunit K (107 aa).

Transmembrane regions (helical) follow at residues 11-31 (LTHY…GVLL), 36-56 (IVLL…FVAF), and 67-87 (IMVF…LALA).

This sequence belongs to the complex I subunit 4L family. NDH-1 is composed of 14 different subunits. Subunits NuoA, H, J, K, L, M, N constitute the membrane sector of the complex.

It localises to the cell inner membrane. It carries out the reaction a quinone + NADH + 5 H(+)(in) = a quinol + NAD(+) + 4 H(+)(out). Its function is as follows. NDH-1 shuttles electrons from NADH, via FMN and iron-sulfur (Fe-S) centers, to quinones in the respiratory chain. The immediate electron acceptor for the enzyme in this species is believed to be ubiquinone. Couples the redox reaction to proton translocation (for every two electrons transferred, four hydrogen ions are translocated across the cytoplasmic membrane), and thus conserves the redox energy in a proton gradient. The polypeptide is NADH-quinone oxidoreductase subunit K (Bdellovibrio bacteriovorus (strain ATCC 15356 / DSM 50701 / NCIMB 9529 / HD100)).